The sequence spans 426 residues: Glutamate-1-semialdehyde 2,1-aminomutase (426 aa).

K268 is subject to N6-(pyridoxal phosphate)lysine.

Belongs to the class-III pyridoxal-phosphate-dependent aminotransferase family. HemL subfamily. Pyridoxal 5'-phosphate serves as cofactor.

Its subcellular location is the cytoplasm. It carries out the reaction (S)-4-amino-5-oxopentanoate = 5-aminolevulinate. It functions in the pathway porphyrin-containing compound metabolism; protoporphyrin-IX biosynthesis; 5-aminolevulinate from L-glutamyl-tRNA(Glu): step 2/2. In Saccharolobus islandicus (strain M.16.27) (Sulfolobus islandicus), this protein is Glutamate-1-semialdehyde 2,1-aminomutase.